The sequence spans 243 residues: Terpene cyclase janB (243 aa).

The next 7 helical transmembrane spans lie at 19 to 39 (LADL…VGMV), 48 to 68 (YGMA…YCVF), 77 to 97 (LGVF…AIIF), 112 to 132 (LPWI…ALAA), 134 to 154 (IGPS…LSVG), 172 to 194 (LWLS…WMYW), and 205 to 225 (LVLW…VCFW).

This sequence belongs to the paxB family.

Its subcellular location is the membrane. The protein operates within secondary metabolite biosynthesis. Functionally, terpene cyclase; part of the gene cluster that mediates the biosynthesis of the indole diterpenes janthitremanes such as shearinine K or shearinine A. The geranylgeranyl diphosphate (GGPP) synthase janG catalyzes the first step in janthitremane biosynthesis via conversion of farnesyl pyrophosphate and isopentyl pyrophosphate into geranylgeranyl pyrophosphate (GGPP). Condensation of indole-3-glycerol phosphate with GGPP by the prenyl transferase janC then forms 3-geranylgeranylindole (3-GGI). Epoxidation by the FAD-dependent monooxygenase janM leads to a epoxidized-GGI that is substrate of the terpene cyclase janB for cyclization to yield paspaline. Paspaline is subsequently converted to 13-desoxypaspaline by the cytochrome P450 monooxygenase janP, via beta-PC-M6 in a series of alpha-face oxidations. The cytochrome P450 monooxygenase janQ is proposed to carry out sequential beta-face oxidation steps at C-7 and C-13 of 13-desoxypaspaline to form paspalicine and paspalinine respectively. The indole diterpene prenyltransferase janD may then convert paspalinine into shearinine K which is substrate of janO and/or additional enzymes for oxidation and cyclization to generate shearinine A. This chain is Terpene cyclase janB, found in Penicillium janthinellum (Penicillium vitale).